A 207-amino-acid polypeptide reads, in one-letter code: 8-oxoguanine DNA glycosylase/AP lyase (207 aa).

Residues Lys129 and Asp147 contribute to the active site.

The protein belongs to the type-2 OGG1 family.

It catalyses the reaction 2'-deoxyribonucleotide-(2'-deoxyribose 5'-phosphate)-2'-deoxyribonucleotide-DNA = a 3'-end 2'-deoxyribonucleotide-(2,3-dehydro-2,3-deoxyribose 5'-phosphate)-DNA + a 5'-end 5'-phospho-2'-deoxyribonucleoside-DNA + H(+). Catalyzes the excision of an oxidatively damaged form of guanine (7,8-dihydro-8-oxoguanine = 8-oxoG) from DNA. Also cleaves the DNA backbone at apurinic/apyrimidinic sites (AP sites). This chain is 8-oxoguanine DNA glycosylase/AP lyase, found in Thermotoga maritima (strain ATCC 43589 / DSM 3109 / JCM 10099 / NBRC 100826 / MSB8).